A 155-amino-acid polypeptide reads, in one-letter code: uncharacterized protein (155 aa).

2 disordered regions span residues 24 to 63 and 80 to 155; these read RVGY…VVLK and KAAK…DENE. Positions 43–56 are enriched in acidic residues; the sequence is PDEDGNESDKEDEQ. Ser-50 is subject to Phosphoserine. Lys-108 is modified (N6-acetyllysine). A compositionally biased stretch (polar residues) spans 128–147; that stretch reads KQSPVRKNSQKQIKNSSLLS. Ser-130, Ser-147, and Ser-150 each carry phosphoserine.

This is an uncharacterized protein from Rattus norvegicus (Rat).